The sequence spans 208 residues: Ubiquitin-conjugating enzyme E2 S (208 aa).

In terms of domain architecture, UBC core spans 14-160 (QTIRQVMKEL…ARMMTEIHAQ (147 aa)). The Glycyl thioester intermediate role is filled by Cys98. The tract at residues 161 to 196 (PAKCGAGASDAKDDDGPSTKKHAGVDKKLQDKKKEK) is disordered. The segment covering 170 to 196 (DAKDDDGPSTKKHAGVDKKLQDKKKEK) has biased composition (basic and acidic residues).

It belongs to the ubiquitin-conjugating enzyme family.

It catalyses the reaction S-ubiquitinyl-[E1 ubiquitin-activating enzyme]-L-cysteine + [E2 ubiquitin-conjugating enzyme]-L-cysteine = [E1 ubiquitin-activating enzyme]-L-cysteine + S-ubiquitinyl-[E2 ubiquitin-conjugating enzyme]-L-cysteine.. Its pathway is protein modification; protein ubiquitination. Catalyzes the covalent attachment of ubiquitin to other proteins. Acts as an essential factor of the anaphase promoting complex/cyclosome (APC/C), a cell cycle-regulated ubiquitin ligase that controls progression through mitosis. Acts by specifically elongating polyubiquitin chains initiated by the E2 enzyme vih/UbcH10 on APC/C substrates, enhancing the degradation of APC/C substrates by the proteasome and promoting mitotic exit. The protein is Ubiquitin-conjugating enzyme E2 S of Drosophila grimshawi (Hawaiian fruit fly).